A 272-amino-acid chain; its full sequence is Phosphoribosylformylglycinamidine synthase subunit PurQ (272 aa).

Residues 8–272 (VLVMSGYGIN…FKNAVEYFNK (265 aa)) enclose the Glutamine amidotransferase type-1 domain. The active-site Nucleophile is cysteine 98. Catalysis depends on residues histidine 225, glutamate 227, and glutamate 235.

Part of the FGAM synthase complex composed of 1 PurL, 1 PurQ and 2 PurS subunits.

The protein localises to the cytoplasm. It catalyses the reaction N(2)-formyl-N(1)-(5-phospho-beta-D-ribosyl)glycinamide + L-glutamine + ATP + H2O = 2-formamido-N(1)-(5-O-phospho-beta-D-ribosyl)acetamidine + L-glutamate + ADP + phosphate + H(+). The enzyme catalyses L-glutamine + H2O = L-glutamate + NH4(+). Its pathway is purine metabolism; IMP biosynthesis via de novo pathway; 5-amino-1-(5-phospho-D-ribosyl)imidazole from N(2)-formyl-N(1)-(5-phospho-D-ribosyl)glycinamide: step 1/2. Functionally, part of the phosphoribosylformylglycinamidine synthase complex involved in the purines biosynthetic pathway. Catalyzes the ATP-dependent conversion of formylglycinamide ribonucleotide (FGAR) and glutamine to yield formylglycinamidine ribonucleotide (FGAM) and glutamate. The FGAM synthase complex is composed of three subunits. PurQ produces an ammonia molecule by converting glutamine to glutamate. PurL transfers the ammonia molecule to FGAR to form FGAM in an ATP-dependent manner. PurS interacts with PurQ and PurL and is thought to assist in the transfer of the ammonia molecule from PurQ to PurL. The protein is Phosphoribosylformylglycinamidine synthase subunit PurQ of Methanococcus maripaludis (strain DSM 14266 / JCM 13030 / NBRC 101832 / S2 / LL).